The primary structure comprises 1158 residues: ATP-dependent helicase/deoxyribonuclease subunit B (1158 aa).

The 275-residue stretch at 1–275 (MTLHAYLGRA…QYFNQLYRFN (275 aa)) folds into the UvrD-like helicase ATP-binding domain. 8–15 (GRAGTGKS) contributes to the ATP binding site. Residues 269-583 (NQLYRFNNQD…SIGTMDLAKV (315 aa)) form the UvrD-like helicase C-terminal domain. The [4Fe-4S] cluster site is built by Cys784, Cys1112, Cys1115, and Cys1121.

This sequence belongs to the helicase family. AddB/RexB type 1 subfamily. Heterodimer of AddA and AddB. Mg(2+) serves as cofactor. It depends on [4Fe-4S] cluster as a cofactor.

The heterodimer acts as both an ATP-dependent DNA helicase and an ATP-dependent, dual-direction single-stranded exonuclease. Recognizes the chi site generating a DNA molecule suitable for the initiation of homologous recombination. The AddB subunit has 5' -&gt; 3' nuclease activity but not helicase activity. The sequence is that of ATP-dependent helicase/deoxyribonuclease subunit B from Staphylococcus aureus (strain MSSA476).